The chain runs to 98 residues: Large ribosomal subunit protein uL23 (98 aa).

This sequence belongs to the universal ribosomal protein uL23 family. In terms of assembly, part of the 50S ribosomal subunit. Contacts protein L29, and trigger factor when it is bound to the ribosome.

One of the early assembly proteins it binds 23S rRNA. One of the proteins that surrounds the polypeptide exit tunnel on the outside of the ribosome. Forms the main docking site for trigger factor binding to the ribosome. The protein is Large ribosomal subunit protein uL23 of Bordetella avium (strain 197N).